Consider the following 161-residue polypeptide: Alpha-crystallin A chain (161 aa).

Residues 1-51 (ALGPFYPSRXXXXXXXXXXXXXXXXXXXXXXXXXXXXQSLFRTVLDSGISE) form a required for complex formation with BFSP1 and BFSP2 region. The residue at position 38 (Gln-38) is a Deamidated glutamine; partial. The sHSP domain maps to 40–150 (LFRTVLDSGI…SHSERAIPVS (111 aa)). N6-acetyllysine is present on Lys-87. Residue His-88 coordinates Zn(2+). Asn-89 bears the Deamidated asparagine; partial mark. Residues Glu-90 and His-95 each contribute to the Zn(2+) site. Ser-110 bears the Phosphoserine mark. Asn-111 bears the Deamidated asparagine; partial mark. A disulfide bridge links Cys-119 with Cys-130. Gln-135 is subject to Deamidated glutamine; partial. The segment at 140-161 (ASHSERAIPVSREEKPSSAPSS) is disordered. The segment covering 141-155 (SHSERAIPVSREEKP) has biased composition (basic and acidic residues). Residue His-142 coordinates Zn(2+). A glycan (O-linked (GlcNAc) serine) is linked at Ser-150.

This sequence belongs to the small heat shock protein (HSP20) family. Heteromer composed of three CRYAA and one CRYAB subunits. Inter-subunit bridging via zinc ions enhances stability, which is crucial as there is no protein turn over in the lens. Can also form homodimers and homotetramers (dimers of dimers) which serve as the building blocks of homooligomers. Within homooligomers, the zinc-binding motif is created from residues of 3 different molecules. His-88 and Glu-90 from one molecule are ligands of the zinc ion, and His-95 and His-142 residues from additional molecules complete the site with tetrahedral coordination geometry. Part of a complex required for lens intermediate filament formation composed of BFSP1, BFSP2 and CRYAA. In terms of processing, undergoes age-dependent proteolytical cleavage at the C-terminus.

It localises to the cytoplasm. The protein resides in the nucleus. In terms of biological role, contributes to the transparency and refractive index of the lens. In its oxidized form (absence of intramolecular disulfide bond), acts as a chaperone, preventing aggregation of various proteins under a wide range of stress conditions. Required for the correct formation of lens intermediate filaments as part of a complex composed of BFSP1, BFSP2 and CRYAA. The polypeptide is Alpha-crystallin A chain (CRYAA) (Galegeeska rufescens (East African rufous sengi)).